A 334-amino-acid polypeptide reads, in one-letter code: Transaldolase (334 aa).

Ser-2 bears the N-acetylserine mark. Lys-143 serves as the catalytic Schiff-base intermediate with substrate.

This sequence belongs to the transaldolase family. Type 1 subfamily. As to quaternary structure, homodimer.

It catalyses the reaction D-sedoheptulose 7-phosphate + D-glyceraldehyde 3-phosphate = D-erythrose 4-phosphate + beta-D-fructose 6-phosphate. Its pathway is carbohydrate degradation; pentose phosphate pathway; D-glyceraldehyde 3-phosphate and beta-D-fructose 6-phosphate from D-ribose 5-phosphate and D-xylulose 5-phosphate (non-oxidative stage): step 2/3. Its function is as follows. Transaldolase is important for the balance of metabolites in the pentose-phosphate pathway. This chain is Transaldolase (TAL1), found in Kluyveromyces lactis (strain ATCC 8585 / CBS 2359 / DSM 70799 / NBRC 1267 / NRRL Y-1140 / WM37) (Yeast).